A 492-amino-acid polypeptide reads, in one-letter code: Probable cytosol aminopeptidase (492 aa).

Residues Lys-248 and Asp-253 each contribute to the Mn(2+) site. Lys-260 is a catalytic residue. Positions 271, 330, and 332 each coordinate Mn(2+). Arg-334 is an active-site residue.

This sequence belongs to the peptidase M17 family. It depends on Mn(2+) as a cofactor.

It localises to the cytoplasm. The enzyme catalyses Release of an N-terminal amino acid, Xaa-|-Yaa-, in which Xaa is preferably Leu, but may be other amino acids including Pro although not Arg or Lys, and Yaa may be Pro. Amino acid amides and methyl esters are also readily hydrolyzed, but rates on arylamides are exceedingly low.. The catalysed reaction is Release of an N-terminal amino acid, preferentially leucine, but not glutamic or aspartic acids.. Presumably involved in the processing and regular turnover of intracellular proteins. Catalyzes the removal of unsubstituted N-terminal amino acids from various peptides. In Aeropyrum pernix (strain ATCC 700893 / DSM 11879 / JCM 9820 / NBRC 100138 / K1), this protein is Probable cytosol aminopeptidase (pepA).